The primary structure comprises 529 residues: Peptide chain release factor 3 (529 aa).

The region spanning 11 to 280 (NKRRTFAIIS…GLTEWAPKPQ (270 aa)) is the tr-type G domain. GTP-binding positions include 20 to 27 (SHPDAGKT), 88 to 92 (DTPGH), and 142 to 145 (NKLD).

The protein belongs to the TRAFAC class translation factor GTPase superfamily. Classic translation factor GTPase family. PrfC subfamily.

The protein resides in the cytoplasm. In terms of biological role, increases the formation of ribosomal termination complexes and stimulates activities of RF-1 and RF-2. It binds guanine nucleotides and has strong preference for UGA stop codons. It may interact directly with the ribosome. The stimulation of RF-1 and RF-2 is significantly reduced by GTP and GDP, but not by GMP. The protein is Peptide chain release factor 3 of Mannheimia succiniciproducens (strain KCTC 0769BP / MBEL55E).